Here is a 213-residue protein sequence, read N- to C-terminus: Large ribosomal subunit protein bL25 (213 aa).

It belongs to the bacterial ribosomal protein bL25 family. CTC subfamily. Part of the 50S ribosomal subunit; part of the 5S rRNA/L5/L18/L25 subcomplex. Contacts the 5S rRNA. Binds to the 5S rRNA independently of L5 and L18.

In terms of biological role, this is one of the proteins that binds to the 5S RNA in the ribosome where it forms part of the central protuberance. The sequence is that of Large ribosomal subunit protein bL25 from Mesorhizobium japonicum (strain LMG 29417 / CECT 9101 / MAFF 303099) (Mesorhizobium loti (strain MAFF 303099)).